A 398-amino-acid chain; its full sequence is tRNA-specific 2-thiouridylase MnmA (398 aa).

Residues A20–S27 and L46 contribute to the ATP site. C114 functions as the Nucleophile in the catalytic mechanism. The cysteines at positions 114 and 210 are disulfide-linked. G138 is a binding site for ATP. The interval R160 to Q162 is interaction with tRNA. C210 acts as the Cysteine persulfide intermediate in catalysis.

Belongs to the MnmA/TRMU family.

The protein localises to the cytoplasm. It carries out the reaction S-sulfanyl-L-cysteinyl-[protein] + uridine(34) in tRNA + AH2 + ATP = 2-thiouridine(34) in tRNA + L-cysteinyl-[protein] + A + AMP + diphosphate + H(+). Its function is as follows. Catalyzes the 2-thiolation of uridine at the wobble position (U34) of tRNA, leading to the formation of s(2)U34. This Brucella canis (strain ATCC 23365 / NCTC 10854 / RM-666) protein is tRNA-specific 2-thiouridylase MnmA.